The chain runs to 101 residues: UPF0235 protein CJA_0091 (101 aa).

Belongs to the UPF0235 family.

The polypeptide is UPF0235 protein CJA_0091 (Cellvibrio japonicus (strain Ueda107) (Pseudomonas fluorescens subsp. cellulosa)).